Here is a 155-residue protein sequence, read N- to C-terminus: Ribosome maturation factor RimP (155 aa).

The protein belongs to the RimP family.

Its subcellular location is the cytoplasm. Required for maturation of 30S ribosomal subunits. This is Ribosome maturation factor RimP from Desulforapulum autotrophicum (strain ATCC 43914 / DSM 3382 / VKM B-1955 / HRM2) (Desulfobacterium autotrophicum).